We begin with the raw amino-acid sequence, 194 residues long: Imidazoleglycerol-phosphate dehydratase (194 aa).

Belongs to the imidazoleglycerol-phosphate dehydratase family.

The protein localises to the cytoplasm. The enzyme catalyses D-erythro-1-(imidazol-4-yl)glycerol 3-phosphate = 3-(imidazol-4-yl)-2-oxopropyl phosphate + H2O. It participates in amino-acid biosynthesis; L-histidine biosynthesis; L-histidine from 5-phospho-alpha-D-ribose 1-diphosphate: step 6/9. The polypeptide is Imidazoleglycerol-phosphate dehydratase (Bacillus subtilis (strain 168)).